A 176-amino-acid polypeptide reads, in one-letter code: Small ribosomal subunit protein uS5 (176 aa).

An S5 DRBM domain is found at 11–74 (LSEVLVDVNR…QAAKKRMMKV (64 aa)).

It belongs to the universal ribosomal protein uS5 family. In terms of assembly, part of the 30S ribosomal subunit. Contacts proteins S4 and S8.

Its function is as follows. With S4 and S12 plays an important role in translational accuracy. Functionally, located at the back of the 30S subunit body where it stabilizes the conformation of the head with respect to the body. The chain is Small ribosomal subunit protein uS5 from Rickettsia conorii (strain ATCC VR-613 / Malish 7).